Reading from the N-terminus, the 159-residue chain is MRAALPPARLLPLLLLLALLGAPAARASRAQSAAPPQPGAERQPRPPPGPGPGNATGTGSGEAAGGGGSSNSSGDALVTRISSLLRDLHTLKAAVIVACAFTAFLIACLLLRVFRSGKRLKKTRKYDIITTPAERVEMAPLNEEDDEDEDSTVFDIKYR.

A signal peptide spans 1–27; it reads MRAALPPARLLPLLLLLALLGAPAARA. Residues 28–73 form a disordered region; the sequence is SRAQSAAPPQPGAERQPRPPPGPGPGNATGTGSGEAAGGGGSSNSS. Residues 28 to 90 are Extracellular-facing; that stretch reads SRAQSAAPPQ…ISSLLRDLHT (63 aa). Residues 52 to 69 are compositionally biased toward gly residues; that stretch reads PGNATGTGSGEAAGGGGS. Residue Asn-54 is glycosylated (N-linked (GlcNAc...) asparagine). Residues 91–111 traverse the membrane as a helical segment; it reads LKAAVIVACAFTAFLIACLLL. Over 112 to 159 the chain is Cytoplasmic; sequence RVFRSGKRLKKTRKYDIITTPAERVEMAPLNEEDDEDEDSTVFDIKYR.

Belongs to the FAM174 family.

It is found in the cell membrane. Its subcellular location is the golgi apparatus. Functionally, essential for Golgi structural integrity. In Bos taurus (Bovine), this protein is Membrane protein FAM174B (FAM174B).